A 932-amino-acid polypeptide reads, in one-letter code: Chaperone protein ClpC3, chloroplastic (932 aa).

The tract at residues 1-20 (MERTLLNPPPSLRSPACRTT) is disordered. The transit peptide at 1–48 (MERTLLNPPPSLRSPACRTTTATRIRPSSSMATMIPTPPPMRHARLVK) directs the protein to the chloroplast. One can recognise a Clp R domain in the interval 99-240 (FDMFTDKAIK…RSEVIRMISD (142 aa)). Repeat regions lie at residues 102–167 (FTDK…AGRG) and 177–240 (FTPA…MISD). The interval 264-511 (LLEYGTNLTK…LVRLRNAQLP (248 aa)) is i. Position 309-316 (309-316 (GEPGVGKT)) interacts with ATP. A UVR domain is found at 518–553 (EKKLKKIMAEKSEAIRSQDFEKAGALRGEEVELKSE). The segment at 579-770 (VTEADVQHIV…LIIMTSNVGS (192 aa)) is II. ATP is bound at residue 653-660 (GPTGVGKS).

The protein belongs to the ClpA/ClpB family. ClpC subfamily.

The protein localises to the plastid. It localises to the chloroplast. Functionally, molecular chaperone that may interact with a ClpP-like protease involved in degradation of denatured proteins in the chloroplast. This Oryza sativa subsp. japonica (Rice) protein is Chaperone protein ClpC3, chloroplastic (CLPC3).